The primary structure comprises 466 residues: Metaxin-1 (466 aa).

A compositionally biased stretch (low complexity) spans 1 to 19 (MLLGGPPRSPRSGTSPKGP). The interval 1–133 (MLLGGPPRSP…AVAGGGPRQG (133 aa)) is disordered. Positions 20 to 36 (WSSTGHVQFGKSPQTWP) are enriched in polar residues. The segment covering 90–110 (ARGPVPRSSAASRARRSLASP) has biased composition (low complexity). Glycyl lysine isopeptide (Lys-Gly) (interchain with G-Cter in ubiquitin) cross-links involve residues K187, K190, K227, and K317. A helical membrane pass occupies residues 421–441 (ILSVLAGLAAMVGYALLSGIV).

It belongs to the metaxin family. As to quaternary structure, interacts with MTX2/metaxin-2. Associates with the mitochondrial contact site and cristae organizing system (MICOS) complex, composed of at least MICOS10/MIC10, CHCHD3/MIC19, CHCHD6/MIC25, APOOL/MIC27, IMMT/MIC60, APOO/MIC23/MIC26 and QIL1/MIC13. This complex was also known under the names MINOS or MitOS complex. The MICOS complex associates with mitochondrial outer membrane proteins SAMM50, MTX1 and MTX2 (together described as components of the mitochondrial outer membrane sorting assembly machinery (SAM) complex) and DNAJC11, mitochondrial inner membrane protein TMEM11 and with HSPA9. The MICOS and SAM complexes together with DNAJC11 are part of a large protein complex spanning both membranes termed the mitochondrial intermembrane space bridging (MIB) complex. Interacts with ARMC1. Ubiquitinated by PRKN during mitophagy, leading to its degradation and enhancement of mitophagy. Deubiquitinated by USP30.

It localises to the membrane. The protein localises to the mitochondrion outer membrane. Functionally, involved in transport of proteins into the mitochondrion. Essential for embryonic development. This is Metaxin-1 (MTX1) from Homo sapiens (Human).